The primary structure comprises 5100 residues: Hemicentin-2 (5100 aa).

The signal sequence occupies residues 1–19 (MTPGAQLLPLLVAISTAVA). In terms of domain architecture, VWFA spans 37–211 (DATLAFVFDV…QVSEVLKWVE (175 aa)). 7 N-linked (GlcNAc...) asparagine glycosylation sites follow: Asn-330, Asn-347, Asn-380, Asn-479, Asn-526, Asn-548, and Asn-675. 43 consecutive Ig-like C2-type domains span residues 426–515 (PGVP…IVIT), 517–601 (PPPQ…RATT), 609–692 (PQVS…ETVT), 699–782 (PSVS…IQLV), 787–877 (PRLT…LVVT), 882–968 (PQIA…VELV), 973–1058 (PRIH…MWLS), 1063–1156 (PMIK…YVLR), 1161–1239 (PQVQ…WKLE), 1246–1335 (PHWG…AKLV), 1340–1437 (PSIR…FNLA), 1442–1531 (PSLL…FQLS), 1536–1624 (PTIW…TSLE), 1629–1717 (PTIE…YSVE), 1722–1810 (PQLL…VEVS), 1825–1913 (SAHH…KDVT), 1920–2008 (PNIE…LRVN), 2011–2100 (PRIT…VILQ), 2105–2189 (PSIL…KHFN), 2196–2285 (PAFP…QSLE), 2290–2379 (PQVT…FALS), 2384–2473 (PHLT…FSVE), 2478–2566 (PSIE…TQLS), 2571–2662 (PTIL…YHVE), 2667–2758 (PSIS…QDFN), 2781–2871 (PHEE…YELL), 2875–2964 (PPVI…KLFT), 2971–3058 (PQIS…VQLN), 3063–3153 (PSFK…FVLA), 3157–3245 (PPTF…FVVS), 3250–3340 (PQIQ…HTVN), 3345–3432 (PTIK…RNFT), 3438–3523 (PPIL…FQLT), 3528–3609 (PHIE…FRVR), 3614–3702 (PNVV…FRVE), 3707–3793 (PTIQ…LDLR), 3798–3886 (PAIA…YQVT), 3891–3977 (PTIA…MVLT), 3982–4067 (PVVK…TRLV), 4071–4158 (PPVI…VHLT), 4163–4244 (PVLT…QAVS), 4252–4336 (PVLQ…KVVT), and 4343–4428 (PVFQ…ALLA). A disulfide bridge connects residues Cys-449 and Cys-497. Intrachain disulfides connect Cys-539–Cys-588, Cys-630–Cys-678, Cys-720–Cys-766, Cys-808–Cys-859, Cys-903–Cys-952, and Cys-994–Cys-1042. 3 positions are modified to omega-N-methylarginine: Arg-909, Arg-914, and Arg-915. N-linked (GlcNAc...) asparagine glycans are attached at residues Asn-1024 and Asn-1068. Disulfide bonds link Cys-1091/Cys-1140 and Cys-1182/Cys-1225. Asn-1264 carries an N-linked (GlcNAc...) asparagine glycan. Residues 1265 to 1293 (ASLPCPAQGTPKPRITWRRGPSSEPLNGR) are disordered. A disulfide bridge connects residues Cys-1269 and Cys-1319. A glycan (N-linked (GlcNAc...) asparagine) is linked at Asn-1350. Intrachain disulfides connect Cys-1363–Cys-1421 and Cys-1465–Cys-1515. Asn-1542 carries an N-linked (GlcNAc...) asparagine glycan. 4 cysteine pairs are disulfide-bonded: Cys-1559/Cys-1608, Cys-1653/Cys-1701, Cys-1745/Cys-1794, and Cys-1846/Cys-1899. Residues Asn-1676 and Asn-1787 are each glycosylated (N-linked (GlcNAc...) asparagine). The N-linked (GlcNAc...) asparagine glycan is linked to Asn-1934. Disulfide bonds link Cys-1941–Cys-1990 and Cys-2033–Cys-2084. Asn-2034, Asn-2113, and Asn-2119 each carry an N-linked (GlcNAc...) asparagine glycan. Disulfide bonds link Cys-2126/Cys-2175 and Cys-2218/Cys-2269. N-linked (GlcNAc...) asparagine glycosylation is found at Asn-2309, Asn-2315, Asn-2345, and Asn-2395. Cys-2314 and Cys-2363 are oxidised to a cystine. Cys-2408 and Cys-2457 form a disulfide bridge. Asn-2469, Asn-2502, Asn-2541, Asn-2606, and Asn-2688 each carry an N-linked (GlcNAc...) asparagine glycan. 2 disulfides stabilise this stretch: Cys-2501–Cys-2550 and Cys-2597–Cys-2646. Cystine bridges form between Cys-2695–Cys-2744 and Cys-2806–Cys-2855. The N-linked (GlcNAc...) asparagine glycan is linked to Asn-2892. Cys-2901 and Cys-2950 are disulfide-bonded. Asn-2986 carries N-linked (GlcNAc...) asparagine glycosylation. 5 cysteine pairs are disulfide-bonded: Cys-2993/Cys-3042, Cys-3088/Cys-3137, Cys-3180/Cys-3229, Cys-3273/Cys-3324, and Cys-3369/Cys-3418. A glycan (N-linked (GlcNAc...) asparagine) is linked at Asn-3430. Cystine bridges form between Cys-3462–Cys-3507, Cys-3551–Cys-3593, and Cys-3637–Cys-3686. Residues Asn-3560 and Asn-3575 are each glycosylated (N-linked (GlcNAc...) asparagine). N-linked (GlcNAc...) asparagine glycans are attached at residues Asn-3717 and Asn-3721. The cysteines at positions 3728 and 3777 are disulfide-linked. Asn-3806 carries an N-linked (GlcNAc...) asparagine glycan. Cystine bridges form between Cys-3819–Cys-3870, Cys-3912–Cys-3961, Cys-4003–Cys-4051, Cys-4093–Cys-4142, Cys-4184–Cys-4231, Cys-4274–Cys-4322, and Cys-4364–Cys-4412. The N-linked (GlcNAc...) asparagine glycan is linked to Asn-4304. The Nidogen G2 beta-barrel domain maps to 4432 to 4654 (EPRGSRGSMT…QTEENEVGCP (223 aa)). Asn-4455 and Asn-4601 each carry an N-linked (GlcNAc...) asparagine glycan. The EGF-like 1; calcium-binding domain maps to 4668-4708 (DKDECSGGPSPCSHTCRNAPGHFSCSCPTGFSLAWDHRNCR). 11 disulfides stabilise this stretch: Cys-4672–Cys-4683, Cys-4679–Cys-4692, Cys-4694–Cys-4707, Cys-4713–Cys-4726, Cys-4720–Cys-4735, Cys-4739–Cys-4752, Cys-4758–Cys-4771, Cys-4765–Cys-4780, Cys-4801–Cys-4812, Cys-4808–Cys-4821, and Cys-4823–Cys-4836. Residues 4709–4753 (DVDECAGNTHLCQEEQRCVNLLGSYNCLASCRPGFRVTADGSNCE) enclose the EGF-like 2; calcium-binding domain. The region spanning 4754-4789 (DVDECLEQLDECHYNQLCENTPGGHHCGCPRGYRQQ) is the EGF-like 3; calcium-binding domain. An EGF-like 4; calcium-binding domain is found at 4797–4837 (DINECLQLPTPCVYQCQNLQGSYRCLCPPGQTLLRDGRTCI). Asn-4845 is a glycosylation site (N-linked (GlcNAc...) asparagine). One can recognise an EGF-like 5; calcium-binding domain in the interval 4904–4943 (DLDECRVRSLCQHACQNTEGSYYCLCPSGYRLLPSGKNCQ). 3 disulfides stabilise this stretch: Cys-4908/Cys-4918, Cys-4914/Cys-4927, and Cys-4929/Cys-4942. An N-linked (GlcNAc...) asparagine glycan is attached at Asn-5035.

In terms of processing, reported to be phosphorylated; however as this position is extracellular, the in vivo relevance is unsure. As to expression, in neonatal skin, localized in the pericellular space of basal epidermal keratinocytes (at protein level). In adult skin, restricted to basal keratinocytes of hair follicles and the interfollicular epidermis. Absent from the myotendinous junction but present in skeletal muscle (at protein level). Expressed in the pericellular extracellular matrix of epithelial cells in a number of tissues including embryonic trophectoderm and adult skin and tongue. Also present in the extracellular matrix of some, but not all, blood vessels. Expressed primarily in epithelial cells in the embryonic epidermis, lung, intestine, skeletal hindlimb muscle, tongue and the muscular layers of the esophagus.

The protein localises to the secreted. It localises to the extracellular space. It is found in the extracellular matrix. The protein resides in the cleavage furrow. The protein is Hemicentin-2 (Hmcn2) of Mus musculus (Mouse).